The sequence spans 360 residues: uncharacterized protein (360 aa).

The THUMP domain maps to 45–148; it reads EDIEDKILQI…KNKTYVSITP (104 aa).

This is an uncharacterized protein from Methanocaldococcus jannaschii (strain ATCC 43067 / DSM 2661 / JAL-1 / JCM 10045 / NBRC 100440) (Methanococcus jannaschii).